Consider the following 338-residue polypeptide: 1-aminocyclopropane-1-carboxylate deaminase (338 aa).

Lys51 bears the N6-(pyridoxal phosphate)lysine mark. Residue Ser78 is the Nucleophile of the active site.

This sequence belongs to the ACC deaminase/D-cysteine desulfhydrase family. In terms of assembly, homotrimer. Pyridoxal 5'-phosphate is required as a cofactor.

It carries out the reaction 1-aminocyclopropane-1-carboxylate + H2O = 2-oxobutanoate + NH4(+). Functionally, catalyzes a cyclopropane ring-opening reaction, the irreversible conversion of 1-aminocyclopropane-1-carboxylate (ACC) to ammonia and alpha-ketobutyrate. Allows growth on ACC as a nitrogen source. The protein is 1-aminocyclopropane-1-carboxylate deaminase of Burkholderia lata (strain ATCC 17760 / DSM 23089 / LMG 22485 / NCIMB 9086 / R18194 / 383).